An 895-amino-acid chain; its full sequence is Catenin alpha-3 (895 aa).

Residues 74-107 (EMIAKEATVLKEELAAALQEVRKESKALKVSAER) are a coiled coil. At Ser160 the chain carries Phosphoserine. Residues 325 to 379 (RERIIAECNAIRQALQDLLTEYMSNTGKTERSNTLNTAIVNMSKKTRDLRRQLRK) adopt a coiled-coil conformation. The residue at position 361 (Thr361) is a Phosphothreonine. Residues 635 to 660 (DVSDLEDDHEVRSHTSIQTEGKTDRA) form a disordered region. A phosphoserine mark is found at Ser637 and Ser647. Thr649 carries the phosphothreonine modification.

This sequence belongs to the vinculin/alpha-catenin family. As to quaternary structure, interacts with CTNNB1. Interacts with PKP2. Expressed in heart (at protein level).

Its subcellular location is the cytoplasm. The protein resides in the cytoskeleton. It localises to the cell junction. It is found in the desmosome. May be involved in formation of stretch-resistant cell-cell adhesion complexes. In Mus musculus (Mouse), this protein is Catenin alpha-3.